A 431-amino-acid chain; its full sequence is MTKSAELYQKAQQTIPGGVNSPVRAFNGVGGSPIFVERADGAFIFDADGKAYIDYVGSWGPMILGHNHAVIREAVIEAAQRGLSFGAPTEMEIKMAELVSELVPSMEQLRMVSSGTEATMSAIRLARGFTGRDKILKFEGCYHGHADSLLVKAGSGALTLGQPSSPGVPADFAKHTLTATFNDLDSVRELFAANKGEIACIIVEPVAGNMNCIPPVEGFHEGLREICDQEGALLIFDEVMTGFRVALGGAQAHYNIKPDLTTLGKVIGGGMPVGAFGGRKEVMQYIAPTGPVYQAGTLSGNPVAMAAGYACLTLLREEGNEKRLASKTKHLADGFKSLAAQHGIPLVVNQVGGMFGFFFTEQEQITCYEDVTKCDLERFKRFFHLMIDHGVYLAPSAFEASFTSLAHGSKEIEATLEAADRCFAILAAESK.

Residue lysine 265 is modified to N6-(pyridoxal phosphate)lysine.

Belongs to the class-III pyridoxal-phosphate-dependent aminotransferase family. HemL subfamily. Homodimer. The cofactor is pyridoxal 5'-phosphate.

It is found in the cytoplasm. The enzyme catalyses (S)-4-amino-5-oxopentanoate = 5-aminolevulinate. The protein operates within porphyrin-containing compound metabolism; protoporphyrin-IX biosynthesis; 5-aminolevulinate from L-glutamyl-tRNA(Glu): step 2/2. This Vibrio vulnificus (strain YJ016) protein is Glutamate-1-semialdehyde 2,1-aminomutase.